A 446-amino-acid chain; its full sequence is Exodeoxyribonuclease 7 large subunit (446 aa).

This sequence belongs to the XseA family. Heterooligomer composed of large and small subunits.

The protein localises to the cytoplasm. The catalysed reaction is Exonucleolytic cleavage in either 5'- to 3'- or 3'- to 5'-direction to yield nucleoside 5'-phosphates.. Its function is as follows. Bidirectionally degrades single-stranded DNA into large acid-insoluble oligonucleotides, which are then degraded further into small acid-soluble oligonucleotides. The protein is Exodeoxyribonuclease 7 large subunit of Streptococcus pneumoniae serotype 19F (strain G54).